The sequence spans 397 residues: Tetratricopeptide repeat protein 4 homolog (397 aa).

3 TPR repeats span residues 90-125 (AETF…KCND), 130-163 (SIYL…NPLN), and 164-197 (MKAY…EPTN).

This sequence belongs to the TTC4 family.

This chain is Tetratricopeptide repeat protein 4 homolog (ttc4), found in Dictyostelium discoideum (Social amoeba).